Consider the following 578-residue polypeptide: MLASLQSEQGLVYLNASSWLDEQQAAKALTRDQLRERVLGQGERIFIDFSGITDKAEPEQARKAMEQLAGISFDADWVLVSAYKGELLFTPLGPPDDPAFYQVMERIDTLAGQGKRHKRSLTQTATAEAGLPRGAFYLKLNRKISVAECTFPRSRTWDRGDRLFCDSPNISLVYRVNLERSLQFGNTGSATPDAKIVRISLDDESAGGGIQLNEDLTWSENIADYLLLDGWARDYATDAIAQDYRFTIDASNTKAAVLKSLPTNLNSKYEHRRISGFEVGVTGGVEVNKDGPKASWRRRPSSASSVTMPTTPRIIGSNARPECPEGEFQLGAGSIRDGGVTALLQDRHRLGNGVRCGSQPHPAAELQGLRAESGCHLQGGADETGSTEFKIDSSVNIRPIYTGIYKHYYVVGGHVSFQGFEDVDKRRRVTASTSFKVDWNHPVFTGGRPVNLQLGGFDNRCLSAGAEHGLSAVTCDETSAAQSFIYDQYGRYVSALDTRRCLDGNNLGQLQSCRLSLGQRWEWKADSDALSNLSAHQLLGHNKQTGELALYDENGNPADVSVRTLTSYTRILRATAGN.

The tract at residues 289-322 (KDGPKASWRRRPSSASSVTMPTTPRIIGSNARPE) is disordered. Residues 448–539 (RPVNLQLGGF…LSNLSAHQLL (92 aa)) enclose the Ricin B-type lectin domain.

Belongs to the HlyA hemolysin family.

In terms of biological role, bacterial hemolysins are exotoxins that attack blood cell membranes and cause cell rupture by mechanisms not clearly defined. This is Hemolysin 4 (ash4) from Aeromonas salmonicida.